Here is a 432-residue protein sequence, read N- to C-terminus: 3-phosphoshikimate 1-carboxyvinyltransferase (432 aa).

Residues lysine 23, serine 24, and arginine 28 each contribute to the 3-phosphoshikimate site. Lysine 23 contributes to the phosphoenolpyruvate binding site. Positions 95 and 123 each coordinate phosphoenolpyruvate. 3-phosphoshikimate contacts are provided by serine 167, glutamine 169, aspartate 317, and lysine 344. Glutamine 169 lines the phosphoenolpyruvate pocket. The Proton acceptor role is filled by aspartate 317. Phosphoenolpyruvate contacts are provided by arginine 348 and arginine 390.

It belongs to the EPSP synthase family. As to quaternary structure, monomer.

It is found in the cytoplasm. The catalysed reaction is 3-phosphoshikimate + phosphoenolpyruvate = 5-O-(1-carboxyvinyl)-3-phosphoshikimate + phosphate. It participates in metabolic intermediate biosynthesis; chorismate biosynthesis; chorismate from D-erythrose 4-phosphate and phosphoenolpyruvate: step 6/7. Catalyzes the transfer of the enolpyruvyl moiety of phosphoenolpyruvate (PEP) to the 5-hydroxyl of shikimate-3-phosphate (S3P) to produce enolpyruvyl shikimate-3-phosphate and inorganic phosphate. This Staphylococcus aureus (strain JH9) protein is 3-phosphoshikimate 1-carboxyvinyltransferase.